A 38-amino-acid chain; its full sequence is Humanin-like protein (38 aa).

In terms of tissue distribution, in the testis, expressed in Leydig cells at 10, 20 and 60 days of age (at protein level). Also expressed in pachytene spermatocytes at day 20 and in vessels, peritubular cells and spermatids at day 60. Not detected in Sertoli cells (at protein level). In the adult ovary, expressed in stromal cells, granulosa cells, theca cells and oocytes at diestrus and proestrus (at protein level). Expressed in the anterior pituitary where it is detected in lactotropes and somatotropes with lower levels in females than males (at protein level). In the hippocampus, expressed in astrocytes but not in neurons or oligodendrocytes (at protein level). Expressed in muscle, liver and hypothalamus but not in epididymal fat (at protein level). Widely expressed with highest levels in cardiac and skeletal muscle and lowest levels in lung, testis and uterus. In the CNS, levels are relatively high in the cerebellum and cortex and low in the hippocampus. In the hippocampus, lower levels are detected in ovariectomized animals than in controls.

It is found in the mitochondrion. The protein resides in the secreted. Its subcellular location is the cytoplasm. Plays a role as a neuroprotective factor. Protects against neuronal cell death induced by amyloid-beta peptides. Also protects against excitotoxic cell death. Prevents amyloid-beta peptide-induced spatial learning and memory impairments, protects against amyloid-beta peptide-induced suppression of hippocampal long-term potentiation, and inhibits amyloid-beta peptide-induced activation of STAT3 and inhibition of CASP3. Prevents glutamate-induced dendritic atrophy in hippocampal neurons and also prevents glutamate-induced decrease in SYP puncta number and total puncta area. Protects anterior pituitary cells from TNF-induced apoptosis. Plays a role in ovarian follicle development by acting as a cryoprotective factor for granulosa cells in the antral follicle. Increases androgen production in Leydig cells and promotes Leydig cell survival by preventing apoptosis. In Rattus norvegicus (Rat), this protein is Humanin-like protein.